The following is a 69-amino-acid chain: Toxin CSTX-11 (69 aa).

4 disulfide bridges follow: C6–C21, C13–C30, C20–C47, and C32–C45.

Expressed by the venom gland.

Its subcellular location is the secreted. It is found in the target cell membrane. Functionally, spider venom toxin that shows calcium channel blocking activity and exhibits cytolytic activity by affecting the outer leaflet curvature and/or pore formation across the membrane. It blocks L-type calcium channels (Cav1/CACNA1) in mammalian neurons at nanomolar concentrations. Furthermore, it produces a slow voltage-independent block of mid/low and high voltage-activated calcium channels in cockroach neurons. Potassium ions, histamine, M-ctenitoxin-Cs1a (AC P83619), CSTX-9 (AC P58604), and CSTX-13 (AC P83919) synergistically increase the insecticidal activity of this toxin. In vivo, it causes paralysis in blow flies and provokes death in drosophila. This Cupiennius salei (American wandering spider) protein is Toxin CSTX-11.